Consider the following 141-residue polypeptide: MPPKAAEKKPSTGGKAPAGGKAPAEKKEAGKKTAAAASGDKKKRGKTRKETYSSYIYKVLKQVHPDTGISTRAMSILNSFVNDIFERVATEASKLAAYNKKSTISSREIQTSVRLILPGELAKHAVSEGTKAVTKYSSSAK.

Positions 1 to 10 are enriched in basic and acidic residues; it reads MPPKAAEKKP. The tract at residues 1–49 is disordered; the sequence is MPPKAAEKKPSTGGKAPAGGKAPAEKKEAGKKTAAAASGDKKKRGKTRK. Residues Lys-8 and Lys-9 each carry the N6-acetyllysine; alternate modification. Residues Lys-8 and Lys-9 each participate in a glycyl lysine isopeptide (Lys-Gly) (interchain with G-Cter in SUMO); alternate cross-link. Low complexity predominate over residues 11-22; the sequence is STGGKAPAGGKA. Position 15 is an N6-acetyllysine (Lys-15). Lys-26 carries the N6-acetyllysine; alternate modification. Lys-26 participates in a covalent cross-link: Glycyl lysine isopeptide (Lys-Gly) (interchain with G-Cter in SUMO); alternate. Lys-27 is covalently cross-linked (Glycyl lysine isopeptide (Lys-Gly) (interchain with G-Cter in SUMO)). A Glycyl lysine isopeptide (Lys-Gly) (interchain with G-Cter in ubiquitin) cross-link involves residue Lys-135.

This sequence belongs to the histone H2B family. The nucleosome is a histone octamer containing two molecules each of H2A, H2B, H3 and H4 assembled in one H3-H4 heterotetramer and two H2A-H2B heterodimers. The octamer wraps approximately 147 bp of DNA. Post-translationally, monoubiquitinated by the ubc2-bre1 complex to form H2BK123ub1. H2BK123ub1 gives a specific tag for epigenetic transcriptional activation and is also prerequisite for H3K4me and H3K79me formation. H2BK123ub1 also modulates the formation of double-strand breaks during meiosis and is a prerequisite for DNA-damage checkpoint activation. In terms of processing, acetylated by gcn5 to form H2BK11ac and H2BK16ac. H2BK16ac can also be formed by esa1. Acetylation of N-terminal lysines and particularly formation of H2BK11acK16ac has a positive effect on transcription. Sumoylation to form H2BK6su or H2BK7su, and probably also H2BK16su or H2BK17su, occurs preferentially near the telomeres and represses gene transcription.

It is found in the nucleus. Its subcellular location is the chromosome. Its function is as follows. Core component of nucleosome. Nucleosomes wrap and compact DNA into chromatin, limiting DNA accessibility to the cellular machineries which require DNA as a template. Histones thereby play a central role in transcription regulation, DNA repair, DNA replication and chromosomal stability. DNA accessibility is regulated via a complex set of post-translational modifications of histones, also called histone code, and nucleosome remodeling. The polypeptide is Histone H2B (htb1) (Aspergillus niger (strain ATCC MYA-4892 / CBS 513.88 / FGSC A1513)).